A 364-amino-acid chain; its full sequence is tRNA/tmRNA (uracil-C(5))-methyltransferase (364 aa).

S-adenosyl-L-methionine-binding residues include Gln-188, Tyr-216, Asn-221, Glu-237, and Asp-297. The active-site Nucleophile is Cys-322. Glu-356 acts as the Proton acceptor in catalysis.

Belongs to the class I-like SAM-binding methyltransferase superfamily. RNA M5U methyltransferase family. TrmA subfamily.

The catalysed reaction is uridine(54) in tRNA + S-adenosyl-L-methionine = 5-methyluridine(54) in tRNA + S-adenosyl-L-homocysteine + H(+). It catalyses the reaction uridine(341) in tmRNA + S-adenosyl-L-methionine = 5-methyluridine(341) in tmRNA + S-adenosyl-L-homocysteine + H(+). Dual-specificity methyltransferase that catalyzes the formation of 5-methyluridine at position 54 (m5U54) in all tRNAs, and that of position 341 (m5U341) in tmRNA (transfer-mRNA). The protein is tRNA/tmRNA (uracil-C(5))-methyltransferase of Colwellia psychrerythraea (strain 34H / ATCC BAA-681) (Vibrio psychroerythus).